Consider the following 218-residue polypeptide: Protein-lysine N-methyltransferase M142.8 (218 aa).

It belongs to the class I-like SAM-binding methyltransferase superfamily. EFM5 family.

Its subcellular location is the cytoplasm. S-adenosyl-L-methionine-dependent protein-lysine N-methyltransferase that methylates elongation factor 1-alpha. The chain is Protein-lysine N-methyltransferase M142.8 from Caenorhabditis elegans.